We begin with the raw amino-acid sequence, 186 residues long: VRPLNCIVAVSQNMGIGKNGDLPWPPLRNEYKYFQRMTTTSSVEGKQNLVIMGRKTWFSIPEKNRPLKDRINIVLSRELKEPPQGAHFLAKSLDDALKLTEQPELKDKVDMVWIVGGSSVYKEAMNKPGHIRLFVTRIMKEFESDTFFPEIDLEKYKLLSECSGVPSDVQEEKGIKYKFEVYEKNN.

The DHFR domain maps to P3–K184. Residues A9 and G15–D21 contribute to the NADP(+) site. E30–Q35 lines the substrate pocket. An N6-acetyllysine; alternate modification is found at K32. Position 32 is an N6-succinyllysine; alternate (K32). An NADP(+)-binding site is contributed by R54–T56. A substrate-binding site is contributed by R70. NADP(+)-binding positions include S76–E78 and G116–E123. C162 carries the cysteine derivative; partial modification.

It belongs to the dihydrofolate reductase family. In terms of assembly, homodimer.

The protein localises to the mitochondrion. It localises to the cytoplasm. It carries out the reaction (6S)-5,6,7,8-tetrahydrofolate + NADP(+) = 7,8-dihydrofolate + NADPH + H(+). Its pathway is cofactor biosynthesis; tetrahydrofolate biosynthesis; 5,6,7,8-tetrahydrofolate from 7,8-dihydrofolate: step 1/1. Its function is as follows. Key enzyme in folate metabolism. Contributes to the de novo mitochondrial thymidylate biosynthesis pathway. Catalyzes an essential reaction for de novo glycine and purine synthesis, and for DNA precursor synthesis. Binds its own mRNA and that of DHFR2. This chain is Dihydrofolate reductase (DHFR), found in Sus scrofa (Pig).